The chain runs to 176 residues: NAD(P)H-quinone oxidoreductase subunit 6, chloroplastic (176 aa).

5 helical membrane-spanning segments follow: residues 10 to 30, 32 to 52, 61 to 81, 92 to 112, and 152 to 172; these read FLLV…VLLP, PIYS…FYIL, AQLL…VMFM, LWTV…ISLI, and FFLP…GAIA.

The protein belongs to the complex I subunit 6 family. NDH is composed of at least 16 different subunits, 5 of which are encoded in the nucleus.

It is found in the plastid. Its subcellular location is the chloroplast thylakoid membrane. The enzyme catalyses a plastoquinone + NADH + (n+1) H(+)(in) = a plastoquinol + NAD(+) + n H(+)(out). It carries out the reaction a plastoquinone + NADPH + (n+1) H(+)(in) = a plastoquinol + NADP(+) + n H(+)(out). NDH shuttles electrons from NAD(P)H:plastoquinone, via FMN and iron-sulfur (Fe-S) centers, to quinones in the photosynthetic chain and possibly in a chloroplast respiratory chain. The immediate electron acceptor for the enzyme in this species is believed to be plastoquinone. Couples the redox reaction to proton translocation, and thus conserves the redox energy in a proton gradient. The protein is NAD(P)H-quinone oxidoreductase subunit 6, chloroplastic (ndhG) of Atropa belladonna (Belladonna).